A 204-amino-acid polypeptide reads, in one-letter code: Ribosome maturation factor RimM (204 aa).

The PRC barrel domain occupies 117–192; that stretch reads DEDEFFSADL…EVTIDPPDDL (76 aa).

The protein belongs to the RimM family. As to quaternary structure, binds ribosomal protein uS19.

The protein localises to the cytoplasm. In terms of biological role, an accessory protein needed during the final step in the assembly of 30S ribosomal subunit, possibly for assembly of the head region. Essential for efficient processing of 16S rRNA. May be needed both before and after RbfA during the maturation of 16S rRNA. It has affinity for free ribosomal 30S subunits but not for 70S ribosomes. In Methylobacterium nodulans (strain LMG 21967 / CNCM I-2342 / ORS 2060), this protein is Ribosome maturation factor RimM.